The sequence spans 139 residues: Large-conductance mechanosensitive channel (139 aa).

The next 2 membrane-spanning stretches (helical) occupy residues 9-29 (AFAVKGNVVDMAVGIIIGAAF) and 79-99 (IQTVIDFVIVAFAIFMGVKAI).

The protein belongs to the MscL family. In terms of assembly, homopentamer.

It is found in the cell inner membrane. Channel that opens in response to stretch forces in the membrane lipid bilayer. May participate in the regulation of osmotic pressure changes within the cell. The polypeptide is Large-conductance mechanosensitive channel (Pseudomonas putida (strain GB-1)).